Here is a 144-residue protein sequence, read N- to C-terminus: Cytochrome c oxidase subunit 4 isoform 1, mitochondrial (144 aa).

The Mitochondrial matrix segment spans residues 1–73; sequence SVVKSEDFSL…SFAEMNRGSN (73 aa). Residue K4 is modified to N6-acetyllysine; alternate. Position 4 is an N6-succinyllysine; alternate (K4). Position 28 is an N6-acetyllysine (K28). S31 and S33 each carry phosphoserine. An N6-acetyllysine; alternate modification is found at K35. An N6-succinyllysine; alternate modification is found at K35. The residue at position 42 (K42) is an N6-acetyllysine. The helical transmembrane segment at 74–99 threads the bilayer; it reads EWKTVVGGAMFFIGFTALVIMWQKHY. Over 100 to 144 the chain is Mitochondrial intermembrane; sequence VYGPLPQSFDKEWVAKQTKRMLDMKVNPIQGLASKWDYEKNEWKK.

Belongs to the cytochrome c oxidase IV family. In terms of assembly, component of the cytochrome c oxidase (complex IV, CIV), a multisubunit enzyme composed of 14 subunits. The complex is composed of a catalytic core of 3 subunits MT-CO1, MT-CO2 and MT-CO3, encoded in the mitochondrial DNA, and 11 supernumerary subunits COX4I, COX5A, COX5B, COX6A, COX6B, COX6C, COX7A, COX7B, COX7C, COX8 and NDUFA4, which are encoded in the nuclear genome. The complex exists as a monomer or a dimer and forms supercomplexes (SCs) in the inner mitochondrial membrane with NADH-ubiquinone oxidoreductase (complex I, CI) and ubiquinol-cytochrome c oxidoreductase (cytochrome b-c1 complex, complex III, CIII), resulting in different assemblies (supercomplex SCI(1)III(2)IV(1) and megacomplex MCI(2)III(2)IV(2)). Interacts with PHB2; the interaction decreases in absence of SPHK2. Interacts with AFG1L. Interacts with ABCB7; this interaction allows the regulation of cellular iron homeostasis and cellular reactive oxygen species (ROS) levels in cardiomyocytes. Interacts with FLVCR2; this interaction occurs in the absence of heme and is disrupted upon heme binding. Interacts with IRGC.

The protein localises to the mitochondrion inner membrane. It participates in energy metabolism; oxidative phosphorylation. In terms of biological role, component of the cytochrome c oxidase, the last enzyme in the mitochondrial electron transport chain which drives oxidative phosphorylation. The respiratory chain contains 3 multisubunit complexes succinate dehydrogenase (complex II, CII), ubiquinol-cytochrome c oxidoreductase (cytochrome b-c1 complex, complex III, CIII) and cytochrome c oxidase (complex IV, CIV), that cooperate to transfer electrons derived from NADH and succinate to molecular oxygen, creating an electrochemical gradient over the inner membrane that drives transmembrane transport and the ATP synthase. Cytochrome c oxidase is the component of the respiratory chain that catalyzes the reduction of oxygen to water. Electrons originating from reduced cytochrome c in the intermembrane space (IMS) are transferred via the dinuclear copper A center (CU(A)) of subunit 2 and heme A of subunit 1 to the active site in subunit 1, a binuclear center (BNC) formed by heme A3 and copper B (CU(B)). The BNC reduces molecular oxygen to 2 water molecules using 4 electrons from cytochrome c in the IMS and 4 protons from the mitochondrial matrix. This is Cytochrome c oxidase subunit 4 isoform 1, mitochondrial (COX4I1) from Pan troglodytes (Chimpanzee).